The chain runs to 438 residues: Aflatoxin cluster transcriptional coactivator aflS (438 aa).

An HTH iclR-type domain is found at 65-134; it reads LALYNQLLAC…PSPGHVAHSV (70 aa). The segment at residues 95-114 is a DNA-binding region (H-T-H motif); it reads FEDVADIAGVPECRLRRLVR.

Interacts with aflR.

The protein resides in the nucleus. It localises to the endosome. Functionally, transcription coactivator involved in regulation of the aflatoxin biosynthesis gene cluster with aflR. The ratio of the expression data between aflS:aflR plays a crucial role in the regulation of aflatoxins production. A high ratio, produced at a range between 17 and 30 degrees Celsius, corresponds with the production profile of aflatoxin G1 biosynthesis. A low ratio, produced over 30 degrees Celsius, is related to aflatoxin B1 biosynthesis. AflJ may act in aflR transport to or from the nucleus, thus controlling the availability of aflR for transcriptional activation of aflatoxin biosynthesis cluster genes. AflJ may also assist in directing endosomes to the cytoplasmic membrane for aflatoxin export. This is Aflatoxin cluster transcriptional coactivator aflS from Aspergillus parasiticus (strain ATCC 56775 / NRRL 5862 / SRRC 143 / SU-1).